A 404-amino-acid polypeptide reads, in one-letter code: tRNA pseudouridine synthase D (404 aa).

The Nucleophile role is filled by D79. One can recognise a TRUD domain in the interval 154–364; it reads GVPNRFGEQR…MEGERRPLRV (211 aa).

It belongs to the pseudouridine synthase TruD family.

It carries out the reaction uridine(13) in tRNA = pseudouridine(13) in tRNA. In terms of biological role, responsible for synthesis of pseudouridine from uracil-13 in transfer RNAs. This chain is tRNA pseudouridine synthase D, found in Geobacter metallireducens (strain ATCC 53774 / DSM 7210 / GS-15).